The primary structure comprises 156 residues: ATP synthase subunit b (156 aa).

Residues Gly4 to Trp26 form a helical membrane-spanning segment.

This sequence belongs to the ATPase B chain family. As to quaternary structure, F-type ATPases have 2 components, F(1) - the catalytic core - and F(0) - the membrane proton channel. F(1) has five subunits: alpha(3), beta(3), gamma(1), delta(1), epsilon(1). F(0) has three main subunits: a(1), b(2) and c(10-14). The alpha and beta chains form an alternating ring which encloses part of the gamma chain. F(1) is attached to F(0) by a central stalk formed by the gamma and epsilon chains, while a peripheral stalk is formed by the delta and b chains.

It localises to the cell inner membrane. Functionally, f(1)F(0) ATP synthase produces ATP from ADP in the presence of a proton or sodium gradient. F-type ATPases consist of two structural domains, F(1) containing the extramembraneous catalytic core and F(0) containing the membrane proton channel, linked together by a central stalk and a peripheral stalk. During catalysis, ATP synthesis in the catalytic domain of F(1) is coupled via a rotary mechanism of the central stalk subunits to proton translocation. In terms of biological role, component of the F(0) channel, it forms part of the peripheral stalk, linking F(1) to F(0). The polypeptide is ATP synthase subunit b (Halorhodospira halophila (strain DSM 244 / SL1) (Ectothiorhodospira halophila (strain DSM 244 / SL1))).